A 634-amino-acid chain; its full sequence is Nicotinic receptor-associated protein 1 (634 aa).

C2 domains are found at residues 1–141 (MNQP…KAHL) and 159–295 (KTGS…EILL). The Ca(2+) site is built by Leu29, Asp30, Asp36, Asp105, Asp107, Asp119, Asp189, Asp195, Asp251, Asp253, and Asp271. The VWFA domain maps to 338–557 (DFAVAVDFTA…LDPDVIQENL (220 aa)). Residues 576–603 (RGFQPRPVDDPWRRDSPPPEFDPILDGT) are disordered. Basic and acidic residues predominate over residues 582–592 (PVDDPWRRDSP).

The protein belongs to the copine family. As to quaternary structure, interacts with nicotinic acetylcholine receptor. Requires Ca(2+) as cofactor. Expressed in head and tail neurons, ventral cord moto-neurons, body wall muscles and hypodermal cells of the vulva.

It is found in the cell membrane. Functionally, exhibits calcium-dependent phospholipid binding properties. May function in membrane trafficking. Regulates synaptic levels of nicotinic acetylcholine receptor subunit lev-1 and unc-38 in the nerve cord. Involved in nicotinic acetylcholine receptor (nAChR)-mediated sensitivity to nicotine and levamisole. Affects directional sperm motility. The polypeptide is Nicotinic receptor-associated protein 1 (nra-1) (Caenorhabditis elegans).